A 628-amino-acid polypeptide reads, in one-letter code: Netrin-4 (628 aa).

The signal sequence occupies residues 1–18; the sequence is MGSCARLLLLWGCTVVAA. The 232-residue stretch at 30–261 folds into the Laminin N-terminal domain; sequence CEKACNPRMG…AIYDFIVKGS (232 aa). N-linked (GlcNAc...) asparagine glycosylation is found at asparagine 56 and asparagine 163. 12 disulfide bridges follow: cysteine 262–cysteine 271, cysteine 264–cysteine 293, cysteine 295–cysteine 304, cysteine 307–cysteine 329, cysteine 332–cysteine 341, cysteine 334–cysteine 359, cysteine 362–cysteine 371, cysteine 374–cysteine 392, cysteine 395–cysteine 413, cysteine 397–cysteine 420, cysteine 422–cysteine 431, and cysteine 434–cysteine 446. 3 Laminin EGF-like domains span residues 262-331, 332-394, and 395-448; these read CFCN…ECRT, CKCN…ACKP, and CSCH…GCRP. Residue asparagine 353 is glycosylated (N-linked (GlcNAc...) asparagine). An N-linked (GlcNAc...) asparagine glycan is attached at asparagine 483. 2 disulfide bridges follow: cysteine 506-cysteine 576 and cysteine 520-cysteine 627. Residues 506–627 form the NTR domain; that stretch reads CECKEQTLGN…KVMDILKREC (122 aa).

May form a homodimer.

It localises to the secreted. The protein localises to the extracellular space. It is found in the extracellular matrix. May play an important role in neural, kidney and vascular development. This chain is Netrin-4 (NTN4), found in Pongo abelii (Sumatran orangutan).